A 2549-amino-acid polypeptide reads, in one-letter code: Serine/threonine-protein kinase mTOR (2549 aa).

Met-1 is modified (N-acetylmethionine). Residues 1 to 651 are interaction with NBN; the sequence is MLGTGPAVAT…HVVSQTAVQV (651 aa). HEAT repeat units follow at residues 16-53, 55-99, 100-137, 138-179, 180-220, 222-276, 277-313, 314-364, 365-409, 410-445, 446-494, 495-529, 530-563, 564-596, 597-636, 637-683, 686-724, 727-766, 769-811, 814-853, 857-893, 894-942, 943-988, 989-1027, 1029-1068, 1069-1105, 1106-1144, 1145-1188, 1189-1225, 1226-1273, 1274-1311, and 1312-1345; these read SSNV…MELR, MSQE…VEGG, NSTR…AMAG, DTFT…AISV, PTFF…LILT, QREP…RISS, MEGE…PRHI, TPFT…CCRD, LMEE…AFTD, TQYL…VAVR, SEFK…RAMG, PGIQ…RQIP, QLKK…GLAH, QLAS…EFEG, HSLT…SIHL, ISGH…DERF, HLAQ…MNPA, MPFL…NAPR, RPYM…VSGL, RKWV…STGY, PYRK…LLGA, LDPY…GNLP, LDEF…KCVQ, FLPQ…KSHI, PYMD…GEFK, LYLP…LFGA, NLDD…RLTE, SLDF…GKKY, QIFI…LADE, EEDP…GAAR, RVSK…QAYN, and PMAR…ELAL. The residue at position 567 (Ser-567) is a Phosphoserine. Thr-1162 carries the phosphothreonine modification. Lys-1218 carries the post-translational modification N6-acetyllysine. Position 1261 is a phosphoserine (Ser-1261). TPR repeat units lie at residues 1346–1382, 1383–1408, 1409–1442, 1443–1473, 1474–1507, 1508–1541, 1542–1574, 1575–1614, 1615–1649, 1650–1693, 1694–1731, 1732–1786, 1787–1846, 1898–1930, 1931–1970, and 1971–2005; these read TSQD…GIVL, LGER…QKGP, TPAI…HFGE, LEIQ…NKED, PELM…VNDE, TQAK…RDTH, DGAF…LDAE, LTAM…RREI, IRQI…PHED, MRTW…PTAH, PQVT…AQHA, IATE…DRSW, YKAW…STEG, NNLQ…VKAI, QIDT…YHPQ, and ALIY…SNTL. An FAT domain is found at 1382–1982; the sequence is LLGERAAKCR…IYPLTVASKS (601 aa). 3 residues coordinate 1D-myo-inositol hexakisphosphate: Lys-1662, Lys-1702, and Arg-1749. Low complexity predominate over residues 1825 to 1860; sequence ITNATTAATTAASAAAATSTEGSNSESEAESNENSP. The disordered stretch occupies residues 1825–1867; that stretch reads ITNATTAATTAASAAAATSTEGSNSESEAESNENSPTPSPLQK. Positions 2012–2144 are sufficient for interaction with the FKBP1A/rapamycin complex; the sequence is VSEELIRVAI…DLELAVPGTY (133 aa). Lys-2066 participates in a covalent cross-link: Glycyl lysine isopeptide (Lys-Gly) (interchain with G-Cter in ubiquitin). In terms of domain architecture, PI3K/PI4K catalytic spans 2156 to 2469; it reads IAPSLQVITS…GVELGEPAHK (314 aa). Ser-2159 is modified (phosphoserine; by TBK1). The interval 2162-2168 is G-loop; the sequence is VITSKQR. Thr-2164 bears the Phosphothreonine mark. Residues Ser-2165 and Gln-2167 each coordinate ATP. At Thr-2173 the chain carries Phosphothreonine; by PKB/AKT1. ATP contacts are provided by Leu-2185, Lys-2187, Glu-2190, Tyr-2225, Gly-2238, Trp-2239, Val-2240, and Thr-2245. The tract at residues 2258–2296 is interaction with MLST8; the sequence is KILLNIEHRIMLRMAPDYDHLTLMQKVEVFEHAVNNTAG. The tract at residues 2335-2343 is catalytic loop; that stretch reads GLGDRHPSN. Asn-2343 contacts Mg(2+). Residues Met-2345 and Ile-2356 each coordinate ATP. The interval 2355–2380 is activation loop; that stretch reads HIDFGDCFEVAMTREKFPEKIPFRLT. Asp-2357 contributes to the Mg(2+) binding site. Thr-2446 is subject to Phosphothreonine; by RPS6KB1. Ser-2448 is modified (phosphoserine; by RPS6KB1). Phosphoserine is present on residues Ser-2478 and Ser-2481. Positions 2517 to 2549 constitute an FATC domain; that stretch reads DTLDVPTQVELLIKQATSHENLCQCYIGWCPFW.

Belongs to the PI3/PI4-kinase family. Part of the mechanistic target of rapamycin complex 1 (mTORC1) which contains MTOR, MLST8 and RPTOR. The mTORC1 complex is a 1 Md obligate dimer of two stoichiometric heterotetramers with overall dimensions of 290 A x 210 A x 135 A. It has a rhomboid shape and a central cavity, the dimeric interfaces are formed by interlocking interactions between the two MTOR and the two RPTOR subunits. The MLST8 subunit forms distal foot-like protuberances, and contacts only one MTOR within the complex, while the small AKT1S1/PRAS40 localizes to the midsection of the central core, in close proximity to RPTOR. mTORC1 associates with AKT1S1/PRAS40, which inhibits its activity by blocking MTOR substrate-recruitment site. Component of the mechanistic target of rapamycin complex 2 (mTORC2), consisting in two heterotretramers composed of MTOR, MLST8, RICTOR and MAPKAP1/SIN1. Interacts with PLPP7 and PML. Interacts with PRR5 and RICTOR; the interaction is direct within the mTORC2 complex and interaction with RICTOR is enhanced by deubiquitination of RICTOR by USP9X. mTORC1 and mTORC2 associate with DEPTOR, which regulates their activity. Interacts with WAC; WAC positively regulates MTOR activity by promoting the assembly of the TTT complex composed of TELO2, TTI1 and TTI2 and the RUVBL complex composed of RUVBL1 and RUVBL2 into the TTT-RUVBL complex which leads to the dimerization of the mTORC1 complex and its subsequent activation. Interacts with UBQLN1. Interacts with TTI1 and TELO2. Interacts with CLIP1; phosphorylates and regulates CLIP1. Interacts with NBN. Interacts with HTR6. Interacts with BRAT1. Interacts with MEAK7 (via C-terminal domain); the interaction increases upon nutrient stimulation. Interacts with TM4SF5; the interaction is positively regulated by arginine and is negatively regulated by leucine. Interacts with GPR137B. Interacts with NCKAP1L. Interacts with TPCN1 and TPCN2; the interaction is required for TPCN1 and TPCN2 sensitivity to ATP. Interacts with ATP6V1A and with CRYAB, forming a ternary complex. Interacts with SLC38A7; this interaction mediates the recruitment of mTORC1 to the lysosome and its subsequent activation. Interacts with TSPAN8. Autophosphorylates when part of mTORC1 or mTORC2. Phosphorylation at Ser-1261, Ser-2159 and Thr-2164 promotes autophosphorylation. Phosphorylated at Ser-2448 by RPS6KB1. Phosphorylation in the kinase domain modulates the interactions of MTOR with RPTOR and AKT1S1/PRAS40 and leads to increased intrinsic mTORC1 kinase activity. Phosphorylation at Ser-2159 by TBK1 in response to growth factors and pathogen recognition receptors promotes mTORC1 activity. Phosphorylation at Ser-2159 by TBK1 in response to EGF growth factor promotes mTORC2 activity, leading to AKT1 phosphorylation and activation. Phosphorylation at Thr-2173 in the ATP-binding region by AKT1 strongly reduces kinase activity. Post-translationally, ubiquitinated at Lys-2066 by the SCF(FBXO22) complex via 'Lys-27'-linked ubiquitination prevents mTORC1 substrate recruitment.

The protein localises to the lysosome membrane. It is found in the endoplasmic reticulum membrane. Its subcellular location is the golgi apparatus membrane. The protein resides in the cell membrane. It localises to the mitochondrion outer membrane. The protein localises to the cytoplasm. It is found in the nucleus. Its subcellular location is the PML body. The protein resides in the microsome membrane. It localises to the cytoplasmic vesicle. The protein localises to the phagosome. It carries out the reaction L-seryl-[protein] + ATP = O-phospho-L-seryl-[protein] + ADP + H(+). The enzyme catalyses L-threonyl-[protein] + ATP = O-phospho-L-threonyl-[protein] + ADP + H(+). The catalysed reaction is L-tyrosyl-[protein] + ATP = O-phospho-L-tyrosyl-[protein] + ADP + H(+). With respect to regulation, the mTORC1 complex is activated in response to nutrients, growth factors or amino acids: activation requires relocalization of the mTORC1 complex to lysosomes that is mediated by the Ragulator complex, SLC38A9, and the Rag GTPases RagA/RRAGA, RagB/RRAGB, RagC/RRAGC and RagD/RRAGD. Activation of mTORC1 by growth factors such as insulin involves AKT1-mediated phosphorylation of TSC1-TSC2, which leads to the activation of the RHEB GTPase a potent activator of the protein kinase activity of mTORC1. Insulin-stimulated and amino acid-dependent phosphorylation at Ser-1261 promotes autophosphorylation and the activation of mTORC1. On the other hand, low cellular energy levels can inhibit mTORC1 through activation of PRKAA1 while hypoxia inhibits mTORC1 through a REDD1-dependent mechanism which may also require PRKAA1. The kinase activity of MTOR within the mTORC1 complex is positively regulated by MLST8. The kinase activity of MTOR is inhibited by DEPTOR and AKT1S1. The non-canonical mTORC1 complex is independent of the RHEB GTPase and specifically mediates phosphorylation of MiT/TFE factors TFEB and TFE3 but not other mTORC1 substrates: it is activated by FLCN, which activates Rag GTPases RagC/RRAGC and RagD/RRAGD. MTOR is the target of the immunosuppressive and anti-cancer drug rapamycin which acts in complex with FKBP1A/FKBP12, and specifically inhibits its kinase activity. mTORC2 is also activated by growth factors, but seems to be nutrient-insensitive. mTORC2 associates and is directly activated by ribosomes. mTORC2 may also be regulated by RHEB but in an indirect manner through the PI3K signaling pathway. Serine/threonine protein kinase which is a central regulator of cellular metabolism, growth and survival in response to hormones, growth factors, nutrients, energy and stress signals. MTOR directly or indirectly regulates the phosphorylation of at least 800 proteins. Functions as part of 2 structurally and functionally distinct signaling complexes mTORC1 and mTORC2 (mTOR complex 1 and 2). In response to nutrients, growth factors or amino acids, mTORC1 is recruited to the lysosome membrane and promotes protein, lipid and nucleotide synthesis by phosphorylating key regulators of mRNA translation and ribosome synthesis. This includes phosphorylation of EIF4EBP1 and release of its inhibition toward the elongation initiation factor 4E (eiF4E). Moreover, phosphorylates and activates RPS6KB1 and RPS6KB2 that promote protein synthesis by modulating the activity of their downstream targets including ribosomal protein S6, eukaryotic translation initiation factor EIF4B, and the inhibitor of translation initiation PDCD4. Stimulates the pyrimidine biosynthesis pathway, both by acute regulation through RPS6KB1-mediated phosphorylation of the biosynthetic enzyme CAD, and delayed regulation, through transcriptional enhancement of the pentose phosphate pathway which produces 5-phosphoribosyl-1-pyrophosphate (PRPP), an allosteric activator of CAD at a later step in synthesis, this function is dependent on the mTORC1 complex. Regulates ribosome synthesis by activating RNA polymerase III-dependent transcription through phosphorylation and inhibition of MAF1 an RNA polymerase III-repressor. Activates dormant ribosomes by mediating phosphorylation of SERBP1, leading to SERBP1 inactivation and reactivation of translation. In parallel to protein synthesis, also regulates lipid synthesis through SREBF1/SREBP1 and LPIN1. To maintain energy homeostasis mTORC1 may also regulate mitochondrial biogenesis through regulation of PPARGC1A. In the same time, mTORC1 inhibits catabolic pathways: negatively regulates autophagy through phosphorylation of ULK1. Under nutrient sufficiency, phosphorylates ULK1 at 'Ser-758', disrupting the interaction with AMPK and preventing activation of ULK1. Also prevents autophagy through phosphorylation of the autophagy inhibitor DAP. Also prevents autophagy by phosphorylating RUBCNL/Pacer under nutrient-rich conditions. Prevents autophagy by mediating phosphorylation of AMBRA1, thereby inhibiting AMBRA1 ability to mediate ubiquitination of ULK1 and interaction between AMBRA1 and PPP2CA. mTORC1 exerts a feedback control on upstream growth factor signaling that includes phosphorylation and activation of GRB10 a INSR-dependent signaling suppressor. Among other potential targets mTORC1 may phosphorylate CLIP1 and regulate microtubules. The mTORC1 complex is inhibited in response to starvation and amino acid depletion. The non-canonical mTORC1 complex, which acts independently of RHEB, specifically mediates phosphorylation of MiT/TFE factors TFEB and TFE3 in the presence of nutrients, promoting their cytosolic retention and inactivation. Upon starvation or lysosomal stress, inhibition of mTORC1 induces dephosphorylation and nuclear translocation of TFEB and TFE3, promoting their transcription factor activity. The mTORC1 complex regulates pyroptosis in macrophages by promoting GSDMD oligomerization. MTOR phosphorylates RPTOR which in turn inhibits mTORC1. As part of the mTORC2 complex, MTOR transduces signals from growth factors to pathways involved in proliferation, cytoskeletal organization, lipogenesis and anabolic output. In response to growth factors, mTORC2 phosphorylates and activates AGC protein kinase family members, including AKT (AKT1, AKT2 and AKT3), PKC (PRKCA, PRKCB and PRKCE) and SGK1. In contrast to mTORC1, mTORC2 is nutrient-insensitive. mTORC2 plays a critical role in AKT1 activation by mediating phosphorylation of different sites depending on the context, such as 'Thr-450', 'Ser-473', 'Ser-477' or 'Thr-479', facilitating the phosphorylation of the activation loop of AKT1 on 'Thr-308' by PDPK1/PDK1 which is a prerequisite for full activation. mTORC2 also regulates the phosphorylation of SGK1 at 'Ser-422'. mTORC2 may regulate the actin cytoskeleton, through phosphorylation of PRKCA, PXN and activation of the Rho-type guanine nucleotide exchange factors RHOA and RAC1A or RAC1B. The mTORC2 complex also phosphorylates various proteins involved in insulin signaling, such as FBXW8 and IGF2BP1. May also regulate insulin signaling by acting as a tyrosine protein kinase that catalyzes phosphorylation of IGF1R and INSR. Regulates osteoclastogenesis by adjusting the expression of CEBPB isoforms. Plays an important regulatory role in the circadian clock function; regulates period length and rhythm amplitude of the suprachiasmatic nucleus (SCN) and liver clocks. This chain is Serine/threonine-protein kinase mTOR, found in Mus musculus (Mouse).